A 189-amino-acid polypeptide reads, in one-letter code: Large ribosomal subunit protein bL12c (189 aa).

Disordered stretches follow at residues 1 to 30 (MAATTTMATLNLPSLTSHPNSSTFPKHPQP) and 165 to 189 (EGVSKDDAEDAKKQLEDAGAKVSIV). The N-terminal 56 residues, 1–56 (MAATTTMATLNLPSLTSHPNSSTFPKHPQPLQFPFRTTTNPISLSSTRTTRLRPIA), are a transit peptide targeting the chloroplast. Residues 11–24 (NLPSLTSHPNSSTF) are compositionally biased toward polar residues. Residues 165–183 (EGVSKDDAEDAKKQLEDAG) show a composition bias toward basic and acidic residues.

As to quaternary structure, component of the chloroplast large ribosomal subunit (LSU). Mature 70S chloroplast ribosomes of higher plants consist of a small (30S) and a large (50S) subunit. The 30S small subunit contains 1 molecule of ribosomal RNA (16S rRNA) and 24 different proteins. The 50S large subunit contains 3 rRNA molecules (23S, 5S and 4.5S rRNA) and 33 different proteins.

It localises to the plastid. The protein resides in the chloroplast. Component of the chloroplast ribosome (chloro-ribosome), a dedicated translation machinery responsible for the synthesis of chloroplast genome-encoded proteins, including proteins of the transcription and translation machinery and components of the photosynthetic apparatus. This is Large ribosomal subunit protein bL12c (RPL12) from Spinacia oleracea (Spinach).